We begin with the raw amino-acid sequence, 541 residues long: Lipase-like PAD4 (541 aa).

The active-site Nucleophile is the Ser-118. Residues Asp-178 and His-229 each act as charge relay system in the active site.

The protein belongs to the AB hydrolase superfamily. Lipase family. Part of a nuclear complex made of EDS1, SG101 and PAD4 that can be redirected to the cytoplasm in the presence of an extranuclear form of EDS1. Sabilized by direct interaction with EDS1 in infected leaves. Part of a nuclear protein complex made of VICTR, PAD4 and EDS1. Interacts with VICTR. Interacts with EDS1.

The protein resides in the nucleus. The protein localises to the cytoplasm. In terms of biological role, probable lipase required downstream of MPK4 for accumulation of the plant defense-potentiating molecule, salicylic acid, thus contributing to the plant innate immunity against invasive biotrophic pathogens and to defense mechanisms upon recognition of microbe-associated molecular patterns (MAMPs). Participates in the regulation of various molecular and physiological processes that influence fitness. Together with SG101, required for programmed cell death (PCD) triggered by NBS-LRR resistance proteins (e.g. RPS4, RPW8.1 and RPW8.2) in response to the fungal toxin fumonisin B1 (FB1) and avirulent pathogens (e.g. P.syringae pv. tomato strain DC3000 avrRps4 and pv. maculicola, turnip crinkle virus (TCV), and H.arabidopsidis isolates CALA2, EMOY2, EMWA1 and HIND4). Together with EDS1, confers a basal resistance by restricting the growth of virulent pathogens (e.g. H.arabidopsidis isolates NOCO2 and EMCO5, E.orontii isolate MGH, and P.syringae pv. tomato strain DC3000 or expressing HopW1-1 (HopPmaA)). Necessary for the salicylic acid-(SA-) dependent systemic acquired resistance (SAR) response that involves expression of multiple defense responses, including synthesis of the phytoalexin camalexin and expression of pathogenesis-related genes (e.g. PR1, ALD1, BGL2 and PR5) in response to pathogens, triggering a signal amplification loop that increases SA levels via EDS5 and SID2, but, together with EDS1, seems to repress the ethylene/jasmonic acid (ET/JA) defense pathway. May also function in response to abiotic stresses such as UV-C light and LSD1-dependent acclimatization to light conditions that promote excess excitation energy (EEE), probably by transducing redox signals and modulating stomatal conductance. Regulates the formation of lysigenous aerenchyma in hypocotyls in response to hypoxia, maybe via hydrogen peroxide production. Modulates leaf senescence in insect-infested tissue and triggers a phloem-based defense mechanism including antibiosis (e.g. green peach aphid (GPA), M.persicae) to limit phloem sap uptake and insect growth, thus providing an EDS1-independent basal resistance to insects. Also involved in regulation of root meristematic zone-targeted growth arrest together with EDS1 and in a VICTR-dependent manner. This chain is Lipase-like PAD4 (PAD4), found in Arabidopsis thaliana (Mouse-ear cress).